The chain runs to 582 residues: Urocanate reductase (582 aa).

Residues 1–20 (MHYKKSIIGIAVTATAIIAG) form the signal peptide. Residue C21 is the site of N-palmitoyl cysteine attachment. C21 carries S-diacylglycerol cysteine lipidation. An FMN phosphoryl threonine modification is found at T93. FAD is bound by residues A143, E162, N170, S171, G175, A176, A285, and D352. R411 functions as the Proton donor in the catalytic mechanism. The FAD site is built by H521, E550, and A565.

The protein belongs to the FAD-dependent oxidoreductase 2 family. FRD/SDH subfamily. The cofactor is FAD. FMN serves as cofactor.

The protein localises to the cell membrane. The catalysed reaction is dihydrourocanate + A = urocanate + AH2. Catalyzes the two-electron reduction of urocanate to dihydrourocanate (also named imidazole propionate or deamino-histidine). The physiological electron donor is unknown; it might be the membrane-bound tetraheme cytochrome c (CymA). Enables anaerobic growth with urocanate as a sole terminal electron acceptor, and thus can provide the cells with a niche where no other bacteria can compete and survive. Is unable to reduce cinnamate and other unsaturated organic acids such as acrylic, crotonic, fumaric and orotic acids. Has no fumarate reductase or succinate dehydrogenase activity. The chain is Urocanate reductase (urdA) from Shewanella oneidensis (strain ATCC 700550 / JCM 31522 / CIP 106686 / LMG 19005 / NCIMB 14063 / MR-1).